A 313-amino-acid polypeptide reads, in one-letter code: Ribosomal RNA small subunit methyltransferase H (313 aa).

S-adenosyl-L-methionine-binding positions include 35–37 (GGH), Asp-55, Phe-80, Asp-102, and Gln-109.

It belongs to the methyltransferase superfamily. RsmH family.

It is found in the cytoplasm. The catalysed reaction is cytidine(1402) in 16S rRNA + S-adenosyl-L-methionine = N(4)-methylcytidine(1402) in 16S rRNA + S-adenosyl-L-homocysteine + H(+). Specifically methylates the N4 position of cytidine in position 1402 (C1402) of 16S rRNA. This chain is Ribosomal RNA small subunit methyltransferase H, found in Shewanella violacea (strain JCM 10179 / CIP 106290 / LMG 19151 / DSS12).